The chain runs to 729 residues: Phosphoribosylformylglycinamidine synthase subunit PurL (729 aa).

The active site involves His54. Residues Tyr57 and Lys96 each contribute to the ATP site. Position 98 (Glu98) interacts with Mg(2+). Residues 99–102 (SHNH) and Arg121 contribute to the substrate site. His100 functions as the Proton acceptor in the catalytic mechanism. Asp122 provides a ligand contact to Mg(2+). Gln245 is a substrate binding site. Residue Asp273 coordinates Mg(2+). 317 to 319 (ETQ) lines the substrate pocket. Positions 495 and 532 each coordinate ATP. Asn533 serves as a coordination point for Mg(2+). Ser535 serves as a coordination point for substrate.

It belongs to the FGAMS family. Monomer. Part of the FGAM synthase complex composed of 1 PurL, 1 PurQ and 2 PurS subunits.

It localises to the cytoplasm. The enzyme catalyses N(2)-formyl-N(1)-(5-phospho-beta-D-ribosyl)glycinamide + L-glutamine + ATP + H2O = 2-formamido-N(1)-(5-O-phospho-beta-D-ribosyl)acetamidine + L-glutamate + ADP + phosphate + H(+). It functions in the pathway purine metabolism; IMP biosynthesis via de novo pathway; 5-amino-1-(5-phospho-D-ribosyl)imidazole from N(2)-formyl-N(1)-(5-phospho-D-ribosyl)glycinamide: step 1/2. In terms of biological role, part of the phosphoribosylformylglycinamidine synthase complex involved in the purines biosynthetic pathway. Catalyzes the ATP-dependent conversion of formylglycinamide ribonucleotide (FGAR) and glutamine to yield formylglycinamidine ribonucleotide (FGAM) and glutamate. The FGAM synthase complex is composed of three subunits. PurQ produces an ammonia molecule by converting glutamine to glutamate. PurL transfers the ammonia molecule to FGAR to form FGAM in an ATP-dependent manner. PurS interacts with PurQ and PurL and is thought to assist in the transfer of the ammonia molecule from PurQ to PurL. The protein is Phosphoribosylformylglycinamidine synthase subunit PurL of Staphylococcus carnosus (strain TM300).